A 645-amino-acid chain; its full sequence is ATP-dependent zinc metalloprotease FtsH 1 (645 aa).

The Cytoplasmic portion of the chain corresponds to 1 to 6; that stretch reads MRSTQK. The chain crosses the membrane as a helical span at residues 7–27; sequence TLALWFFLIIMAVFLFQAYES. Topologically, residues 28–110 are periplasmic; the sequence is KQQKAIADFN…NYERADNGGF (83 aa). The helical transmembrane segment at 111 to 131 threads the bilayer; that stretch reads FQSLLVNWLPLILIVAMFLFI. Topologically, residues 132–645 are cytoplasmic; it reads MRQIQAGGGK…PVGNTGPVTI (514 aa). 203-210 provides a ligand contact to ATP; sequence GSPGTGKT. His425 contacts Zn(2+). Glu426 is an active-site residue. Zn(2+) contacts are provided by His429 and Asp501.

In the central section; belongs to the AAA ATPase family. It in the C-terminal section; belongs to the peptidase M41 family. In terms of assembly, homohexamer. Requires Zn(2+) as cofactor.

The protein resides in the cell inner membrane. Functionally, acts as a processive, ATP-dependent zinc metallopeptidase for both cytoplasmic and membrane proteins. Plays a role in the quality control of integral membrane proteins. This is ATP-dependent zinc metalloprotease FtsH 1 from Bdellovibrio bacteriovorus (strain ATCC 15356 / DSM 50701 / NCIMB 9529 / HD100).